Consider the following 348-residue polypeptide: Flagellar P-ring protein (348 aa).

A signal peptide spans 1–16 (MRVLTIFLLFMTSIFA).

Belongs to the FlgI family. The basal body constitutes a major portion of the flagellar organelle and consists of four rings (L,P,S, and M) mounted on a central rod.

It is found in the periplasm. The protein resides in the bacterial flagellum basal body. In terms of biological role, assembles around the rod to form the L-ring and probably protects the motor/basal body from shearing forces during rotation. The protein is Flagellar P-ring protein of Campylobacter jejuni subsp. jejuni serotype O:6 (strain 81116 / NCTC 11828).